The primary structure comprises 208 residues: Uracil phosphoribosyltransferase (208 aa).

Residues Arg78, Arg103, and 130–138 (DPMLATGGS) contribute to the 5-phospho-alpha-D-ribose 1-diphosphate site. Uracil is bound by residues Ile193 and 198–200 (GDA). Asp199 contacts 5-phospho-alpha-D-ribose 1-diphosphate.

This sequence belongs to the UPRTase family. Mg(2+) serves as cofactor.

The enzyme catalyses UMP + diphosphate = 5-phospho-alpha-D-ribose 1-diphosphate + uracil. It participates in pyrimidine metabolism; UMP biosynthesis via salvage pathway; UMP from uracil: step 1/1. Allosterically activated by GTP. Catalyzes the conversion of uracil and 5-phospho-alpha-D-ribose 1-diphosphate (PRPP) to UMP and diphosphate. This is Uracil phosphoribosyltransferase from Actinobacillus succinogenes (strain ATCC 55618 / DSM 22257 / CCUG 43843 / 130Z).